Consider the following 384-residue polypeptide: Lipid-A-disaccharide synthase (384 aa).

It belongs to the LpxB family.

The catalysed reaction is 2-N,3-O-bis[(3R)-3-hydroxytetradecanoyl]-alpha-D-glucosaminyl 1-phosphate + UDP-2-N,3-O-bis[(3R)-3-hydroxytetradecanoyl]-alpha-D-glucosamine = lipid A disaccharide (E. coli) + UDP + H(+). The enzyme catalyses a lipid X + a UDP-2-N,3-O-bis[(3R)-3-hydroxyacyl]-alpha-D-glucosamine = a lipid A disaccharide + UDP + H(+). The protein operates within glycolipid biosynthesis; lipid IV(A) biosynthesis; lipid IV(A) from (3R)-3-hydroxytetradecanoyl-[acyl-carrier-protein] and UDP-N-acetyl-alpha-D-glucosamine: step 5/6. In terms of biological role, condensation of UDP-2,3-diacylglucosamine and 2,3-diacylglucosamine-1-phosphate to form lipid A disaccharide, a precursor of lipid A, a phosphorylated glycolipid that anchors the lipopolysaccharide to the outer membrane of the cell. In Blochmanniella floridana, this protein is Lipid-A-disaccharide synthase.